A 193-amino-acid chain; its full sequence is ATP synthase subunit b 1 (193 aa).

The segment at 13 to 32 (PAVTGGDTHSGTGVPAEAHG) is disordered. A helical transmembrane segment spans residues 40–60 (ATFPSQLLWLAITFGLFYLFL).

Belongs to the ATPase B chain family. F-type ATPases have 2 components, F(1) - the catalytic core - and F(0) - the membrane proton channel. F(1) has five subunits: alpha(3), beta(3), gamma(1), delta(1), epsilon(1). F(0) has three main subunits: a(1), b(2) and c(10-14). The alpha and beta chains form an alternating ring which encloses part of the gamma chain. F(1) is attached to F(0) by a central stalk formed by the gamma and epsilon chains, while a peripheral stalk is formed by the delta and b chains.

It is found in the cell inner membrane. Its function is as follows. F(1)F(0) ATP synthase produces ATP from ADP in the presence of a proton or sodium gradient. F-type ATPases consist of two structural domains, F(1) containing the extramembraneous catalytic core and F(0) containing the membrane proton channel, linked together by a central stalk and a peripheral stalk. During catalysis, ATP synthesis in the catalytic domain of F(1) is coupled via a rotary mechanism of the central stalk subunits to proton translocation. Component of the F(0) channel, it forms part of the peripheral stalk, linking F(1) to F(0). This Mesorhizobium japonicum (strain LMG 29417 / CECT 9101 / MAFF 303099) (Mesorhizobium loti (strain MAFF 303099)) protein is ATP synthase subunit b 1.